A 433-amino-acid polypeptide reads, in one-letter code: MNRSEALFEQAKKTIPGGVNSPVRAFNGVGGSPLFIEKADGAYIFDADGNKYIDYVGSWGPMILGHNHPKIRQAVLDAVENGLSFGAPTELEVKMAEKVIAMVPSIEQVRMVSSGTEATMSAIRLARGYTNRDKILKFEGCYHGHADCLLVKAGSGALTLGQPSSPGIPEDFAKHTLTATYNDLASVRSLFELHPDAISCIILEPVAGNMNCIPPIPGFLQGLRGLCDEFGALLIIDEVMTGFRVAMGGAQAHYGVVPDLTTLGKVIGGGMPVGAFGGKKAIMQYIAPTGPVYQAGTLSGNPIAMSAGLAQMEALCEPGLYPALAEKTQRIALGMKAAADKHSIPLSITYVGGMFGFFFTTDSAPMTSFAQVTQCNMEHFRYFYHAMLAQGVYLAPSAYEAGFLSMAHGEDELAMTLKAVDSVFAEMKVAFKL.

N6-(pyridoxal phosphate)lysine is present on K265.

The protein belongs to the class-III pyridoxal-phosphate-dependent aminotransferase family. HemL subfamily. In terms of assembly, homodimer. Pyridoxal 5'-phosphate serves as cofactor.

It is found in the cytoplasm. It catalyses the reaction (S)-4-amino-5-oxopentanoate = 5-aminolevulinate. It participates in porphyrin-containing compound metabolism; protoporphyrin-IX biosynthesis; 5-aminolevulinate from L-glutamyl-tRNA(Glu): step 2/2. The polypeptide is Glutamate-1-semialdehyde 2,1-aminomutase (Shewanella denitrificans (strain OS217 / ATCC BAA-1090 / DSM 15013)).